The sequence spans 231 residues: E3 ubiquitin-protein ligase At3g02290 (231 aa).

Basic and acidic residues predominate over residues 103–118 (GSSHSHEEVEPLRSDS). Positions 103–125 (GSSHSHEEVEPLRSDSDADSESF) are disordered. The RING-type; atypical zinc-finger motif lies at 181–222 (CPTCLEEYTSENPKIVTKCSHHFHLSCIYEWMERSENCPVCG).

The protein localises to the cytoplasm. It catalyses the reaction S-ubiquitinyl-[E2 ubiquitin-conjugating enzyme]-L-cysteine + [acceptor protein]-L-lysine = [E2 ubiquitin-conjugating enzyme]-L-cysteine + N(6)-ubiquitinyl-[acceptor protein]-L-lysine.. It participates in protein modification; protein ubiquitination. Its function is as follows. Mediates E2-dependent protein ubiquitination. The sequence is that of E3 ubiquitin-protein ligase At3g02290 from Arabidopsis thaliana (Mouse-ear cress).